The chain runs to 119 residues: Putative ankyrin repeat domain-containing protein 26-like 1 (119 aa).

Residues 15-112 (EKEEDLLHKN…EKQSRQRLTK (98 aa)) adopt a coiled-coil conformation.

The sequence is that of Putative ankyrin repeat domain-containing protein 26-like 1 (ANKRD36BP1) from Homo sapiens (Human).